Reading from the N-terminus, the 581-residue chain is Proline--tRNA ligase 1 (581 aa).

It belongs to the class-II aminoacyl-tRNA synthetase family. ProS type 1 subfamily. Homodimer.

It localises to the cytoplasm. The enzyme catalyses tRNA(Pro) + L-proline + ATP = L-prolyl-tRNA(Pro) + AMP + diphosphate. Its function is as follows. Catalyzes the attachment of proline to tRNA(Pro) in a two-step reaction: proline is first activated by ATP to form Pro-AMP and then transferred to the acceptor end of tRNA(Pro). As ProRS can inadvertently accommodate and process non-cognate amino acids such as alanine and cysteine, to avoid such errors it has two additional distinct editing activities against alanine. One activity is designated as 'pretransfer' editing and involves the tRNA(Pro)-independent hydrolysis of activated Ala-AMP. The other activity is designated 'posttransfer' editing and involves deacylation of mischarged Ala-tRNA(Pro). The misacylated Cys-tRNA(Pro) is not edited by ProRS. The sequence is that of Proline--tRNA ligase 1 from Rhodococcus jostii (strain RHA1).